The primary structure comprises 130 residues: Glycine cleavage system H protein (130 aa).

The Lipoyl-binding domain maps to 28–110 (TVRIGITSVA…FGEGWLFEVE (83 aa)). K69 is modified (N6-lipoyllysine).

Belongs to the GcvH family. As to quaternary structure, the glycine cleavage system is composed of four proteins: P, T, L and H. It depends on (R)-lipoate as a cofactor.

Functionally, the glycine cleavage system catalyzes the degradation of glycine. The H protein shuttles the methylamine group of glycine from the P protein to the T protein. The protein is Glycine cleavage system H protein of Corynebacterium aurimucosum (strain ATCC 700975 / DSM 44827 / CIP 107346 / CN-1) (Corynebacterium nigricans).